Consider the following 688-residue polypeptide: ATP-dependent zinc metalloprotease FTSH 6, chloroplastic (688 aa).

The transit peptide at 1–75 (MKMASSSSAL…GFTSALGTVL (75 aa)) directs the protein to the chloroplast. Over residues 25–36 (QQFQKPASLSKS) the composition is skewed to polar residues. The tract at residues 25–44 (QQFQKPASLSKSSHTHKPSL) is disordered. The transit peptide at 76-83 (AHPAKAEP) directs the protein to the thylakoid. At 84–168 (EAPIEATSNR…AHPMNVNWGA (85 aa)) the chain is on the lumenal, thylakoid side. Residues 169–189 (FLLNFLGNLGFPLILLVSLLL) form a helical membrane-spanning segment. Over 190–688 (TSSSRRNPAG…RIRINDLISV (499 aa)) the chain is Stromal. Position 264-271 (264-271 (GPPGTGKT)) interacts with ATP. Residue His-485 participates in Zn(2+) binding. Glu-486 is a catalytic residue. Residues His-489 and Asp-563 each coordinate Zn(2+).

In the N-terminal section; belongs to the AAA ATPase family. This sequence in the C-terminal section; belongs to the peptidase M41 family. The cofactor is Zn(2+).

Its subcellular location is the plastid. It is found in the chloroplast thylakoid membrane. Probable ATP-dependent zinc metallopeptidase. Involved in the degradation of the light-harvesting complex of photosystem II (LHC II) during senescence or high light acclimation. This is ATP-dependent zinc metalloprotease FTSH 6, chloroplastic (FTSH6) from Arabidopsis thaliana (Mouse-ear cress).